A 715-amino-acid polypeptide reads, in one-letter code: Myosin light chain kinase 3 (715 aa).

Residues Val-67–Pro-114 are disordered. A Protein kinase domain is found at Val-404–Leu-659. Residues Leu-410–Val-418 and Lys-433 each bind ATP. The active-site Proton acceptor is the Asp-525.

The protein belongs to the protein kinase superfamily. CAMK Ser/Thr protein kinase family. Mg(2+) serves as cofactor. Post-translationally, phosphorylated on serine residues.

It is found in the cytoplasm. It catalyses the reaction L-seryl-[myosin light chain] + ATP = O-phospho-L-seryl-[myosin light chain] + ADP + H(+). The enzyme catalyses L-threonyl-[myosin light chain] + ATP = O-phospho-L-threonyl-[myosin light chain] + ADP + H(+). Kinase that phosphorylates MYL2 in vitro. Increases cardiomyocyte contractility. Required for sarcomere formation in the developing heart. The protein is Myosin light chain kinase 3 (mylk3) of Danio rerio (Zebrafish).